The primary structure comprises 420 residues: Polyketide biosynthesis 3-hydroxy-3-methylglutaryl-ACP synthase PksG (420 aa).

Glu82 (proton donor/acceptor) is an active-site residue. Cys114 functions as the Acyl-thioester intermediate in the catalytic mechanism. The active-site Proton donor/acceptor is His250.

This sequence belongs to the thiolase-like superfamily. HMG-CoA synthase family.

It is found in the cytoplasm. It catalyses the reaction 3-oxobutanoyl-[ACP] + acetyl-[ACP] + H2O = (3S)-hydroxy-3-methylglutaryl-[ACP] + holo-[ACP] + H(+). It functions in the pathway antibiotic biosynthesis; bacillaene biosynthesis. Functionally, involved in some intermediate steps for the synthesis of the antibiotic polyketide bacillaene which is involved in secondary metabolism. It catalyzes the aldol condensation between the acetyl group attached to the acyl-carrier-protein AcpK (Ac-AcpK) and a beta-ketothioester polyketide intermediate linked to one of the consecutive thiolation domains of PksL. In Bacillus subtilis (strain 168), this protein is Polyketide biosynthesis 3-hydroxy-3-methylglutaryl-ACP synthase PksG (pksG).